We begin with the raw amino-acid sequence, 131 residues long: Insulin-like 3 (131 aa).

The signal sequence occupies residues 1-24 (MDPRLPAWALVLLGPALVFALGPA). 3 disulfides stabilise this stretch: Cys34-Cys117, Cys46-Cys130, and Cys116-Cys121. The propeptide at 58 to 104 (PVAAGDGELLQWLERRHLLYGLVANSEPAPGGPGLQPMPQTSHHHRH) is c peptide like. Residues 86–105 (APGGPGLQPMPQTSHHHRHR) are disordered.

The protein belongs to the insulin family. As to quaternary structure, heterodimer of a B chain and an A chain linked by two disulfide bonds. In terms of tissue distribution, highest expression in the Leydig cells of the testis.

Its subcellular location is the secreted. In terms of biological role, seems to play a role in testicular function. May be a trophic hormone with a role in testicular descent in fetal life. Is a ligand for LGR8 receptor. The sequence is that of Insulin-like 3 (INSL3) from Callithrix jacchus (White-tufted-ear marmoset).